The sequence spans 116 residues: Beta-2-microglobulin (116 aa).

Positions 1–19 (MRAIITFALFCVLYITVQA) are cleaved as a signal peptide. Residues 24–111 (PKVQVYSHFP…RHMSNTNAYS (88 aa)) enclose the Ig-like C1-type domain. Cysteine 44 and cysteine 99 are joined by a disulfide.

Belongs to the beta-2-microglobulin family. As to quaternary structure, heterodimer of an alpha chain and a beta chain. Beta-2-microglobulin is the beta-chain of major histocompatibility complex class I molecules.

The protein localises to the secreted. Component of the class I major histocompatibility complex (MHC). Involved in the presentation of peptide antigens to the immune system. This is Beta-2-microglobulin (b2m) from Labeobarbus intermedius (Lake tana barbels).